The following is a 172-amino-acid chain: Shikimate kinase (172 aa).

ATP is bound at residue 11 to 16; sequence GAGKST. Residue Ser-15 participates in Mg(2+) binding. Positions 33, 57, and 79 each coordinate substrate. Residue Arg-117 coordinates ATP. Arg-136 contacts substrate. Arg-153 serves as a coordination point for ATP.

The protein belongs to the shikimate kinase family. In terms of assembly, monomer. The cofactor is Mg(2+).

The protein localises to the cytoplasm. The enzyme catalyses shikimate + ATP = 3-phosphoshikimate + ADP + H(+). It participates in metabolic intermediate biosynthesis; chorismate biosynthesis; chorismate from D-erythrose 4-phosphate and phosphoenolpyruvate: step 5/7. Catalyzes the specific phosphorylation of the 3-hydroxyl group of shikimic acid using ATP as a cosubstrate. In Pseudomonas fluorescens (strain Pf0-1), this protein is Shikimate kinase.